Here is a 227-residue protein sequence, read N- to C-terminus: Cytidylate kinase (227 aa).

Residue 12 to 20 (GPSGAGKGT) coordinates ATP.

The protein belongs to the cytidylate kinase family. Type 1 subfamily.

It localises to the cytoplasm. The enzyme catalyses CMP + ATP = CDP + ADP. The catalysed reaction is dCMP + ATP = dCDP + ADP. The chain is Cytidylate kinase from Xanthomonas axonopodis pv. citri (strain 306).